We begin with the raw amino-acid sequence, 354 residues long: Uroporphyrinogen decarboxylase (354 aa).

Residues R27–R31, D77, Y154, T209, and H327 contribute to the substrate site.

Belongs to the uroporphyrinogen decarboxylase family. Homodimer.

The protein localises to the cytoplasm. It carries out the reaction uroporphyrinogen III + 4 H(+) = coproporphyrinogen III + 4 CO2. It functions in the pathway porphyrin-containing compound metabolism; protoporphyrin-IX biosynthesis; coproporphyrinogen-III from 5-aminolevulinate: step 4/4. Functionally, catalyzes the decarboxylation of four acetate groups of uroporphyrinogen-III to yield coproporphyrinogen-III. The chain is Uroporphyrinogen decarboxylase from Escherichia coli O81 (strain ED1a).